The chain runs to 532 residues: Bifunctional purine biosynthesis protein PurH (532 aa).

Residues 1–147 (MAKIKRALIS…KNYRSVTVVT (147 aa)) form the MGS-like domain.

This sequence belongs to the PurH family.

The enzyme catalyses (6R)-10-formyltetrahydrofolate + 5-amino-1-(5-phospho-beta-D-ribosyl)imidazole-4-carboxamide = 5-formamido-1-(5-phospho-D-ribosyl)imidazole-4-carboxamide + (6S)-5,6,7,8-tetrahydrofolate. It carries out the reaction IMP + H2O = 5-formamido-1-(5-phospho-D-ribosyl)imidazole-4-carboxamide. It participates in purine metabolism; IMP biosynthesis via de novo pathway; 5-formamido-1-(5-phospho-D-ribosyl)imidazole-4-carboxamide from 5-amino-1-(5-phospho-D-ribosyl)imidazole-4-carboxamide (10-formyl THF route): step 1/1. It functions in the pathway purine metabolism; IMP biosynthesis via de novo pathway; IMP from 5-formamido-1-(5-phospho-D-ribosyl)imidazole-4-carboxamide: step 1/1. This is Bifunctional purine biosynthesis protein PurH from Magnetococcus marinus (strain ATCC BAA-1437 / JCM 17883 / MC-1).